The following is a 3133-amino-acid chain: Cysteine repeat modular protein A (3133 aa).

The interval 1 to 39 (MDSASTSMSRVHPSGVYRRPLLPSGGPRSTSERDERVDL) is disordered. Positions 30-39 (TSERDERVDL) are enriched in basic and acidic residues. A helical membrane pass occupies residues 123–143 (LFLLFSSSPLLLLLLLHQFFI). Basic and acidic residues-rich tracts occupy residues 173-211 (TFEE…DGKE) and 301-311 (NESEKAERARL). 2 disordered regions span residues 173–234 (TFEE…EGRR) and 294–317 (VSPS…STPA). N-linked (GlcNAc...) asparagine glycosylation is found at N301, N392, and N470. Residues 577–644 (DETLEQGKLY…DPHVRFDFCD (68 aa)) enclose the Kringle domain. 2 disulfide bridges follow: C599–C631 and C620–C643. Residues N1364 and N1532 are each glycosylated (N-linked (GlcNAc...) asparagine). Helical transmembrane passes span 2229-2249 (MVWN…FNIV), 2276-2296 (LTGI…PSWI), and 2339-2359 (VFYA…MSII). N2369 is a glycosylation site (N-linked (GlcNAc...) asparagine). The next 3 membrane-spanning stretches (helical) occupy residues 2420–2440 (AAKF…FVYS), 2489–2509 (VGIT…FLVL), and 2539–2559 (WEMV…VALI). A glycan (N-linked (GlcNAc...) asparagine) is linked at N2565. The helical transmembrane segment at 2569–2589 (VWLAVVIAVIFLIIHLVTQPF) threads the bilayer. N2602 carries N-linked (GlcNAc...) asparagine glycosylation. 2 helical membrane passes run 2607–2627 (IWTI…SGSV) and 2632–2652 (LLFV…SLMF). 2 stretches are compositionally biased toward basic and acidic residues: residues 2827-2838 (FAAKDETPTAEE) and 3049-3069 (QEEN…DREI). Disordered regions lie at residues 2827–2847 (FAAK…DERL) and 3049–3101 (QEEN…LPEG). Residues 2955–3068 (SEALQKRNRK…KEEREEADRE (114 aa)) adopt a coiled-coil conformation. The segment covering 3083–3094 (GEDDTATIDDSS) has biased composition (acidic residues).

In terms of assembly, component of a complex, at least composed of cysteine repeat modular protein A (CRMPa), cysteine repeat modular protein B (CRMPb), micronemal protein 15 (MIC15) and thrombospondin type 1 domain-containing protein (TSP1).

Its subcellular location is the cell membrane. The protein localises to the endoplasmic reticulum. It localises to the golgi apparatus. In terms of biological role, required for triggering rhoptry secretion. Plays a role in host cell invasion. This is Cysteine repeat modular protein A from Toxoplasma gondii.